A 468-amino-acid chain; its full sequence is Na(+)/H(+) antiporter NhaA 2 (468 aa).

The next 11 membrane-spanning stretches (helical) occupy residues 31–51, 82–102, 118–138, 147–167, 176–196, 199–219, 226–246, 321–341, 353–373, 393–413, and 422–442; these read FLHVQAASGIVLLIATAVALA, LHFWINDGLMTIFFFVVGLEI, VLPVAAALGGMLFPALIYLAL, GWGVPMATDIAFAVGALALLG, VLLLALAIIDDIGAILVIAVF, SSISVTGFGLVAVGIAGVLAL, SPVVYAAAGVVIWAGLLSAGV, PWVAYGIMPLFALANAGVSLG, LLLGVVFGLTMGKPLGIMVAC, VLVVGCVAGIGFTMAIFVAGL, and GVAKLAVLLGSLISALVAMAV.

Belongs to the NhaA Na(+)/H(+) (TC 2.A.33) antiporter family.

The protein localises to the cell inner membrane. It catalyses the reaction Na(+)(in) + 2 H(+)(out) = Na(+)(out) + 2 H(+)(in). Na(+)/H(+) antiporter that extrudes sodium in exchange for external protons. This Sorangium cellulosum (strain So ce56) (Polyangium cellulosum (strain So ce56)) protein is Na(+)/H(+) antiporter NhaA 2.